Reading from the N-terminus, the 190-residue chain is RNA pyrophosphohydrolase (190 aa).

The 144-residue stretch at 6 to 149 (GYRPNVGIVL…KRGVYARALC (144 aa)) folds into the Nudix hydrolase domain. A Nudix box motif is present at residues 38–59 (GGMHSDETPVEAMYRELNEETG).

It belongs to the Nudix hydrolase family. RppH subfamily. It depends on a divalent metal cation as a cofactor.

Functionally, accelerates the degradation of transcripts by removing pyrophosphate from the 5'-end of triphosphorylated RNA, leading to a more labile monophosphorylated state that can stimulate subsequent ribonuclease cleavage. This Xylella fastidiosa (strain 9a5c) protein is RNA pyrophosphohydrolase.